A 96-amino-acid polypeptide reads, in one-letter code: Glycine-rich protein DC7.1 (96 aa).

An N-terminal signal peptide occupies residues 1 to 25 (MGSKIFLLLGLSIAFALLISSEVAA). The disordered stretch occupies residues 29–66 (SETTTEGASLDGGHHGGGGGGHYSGGGGHGGSHHGGGG). Repeat copies occupy residues 42–50 (HHGGGGGGH) and 61–67 (HHGGGGH). Residues 42-67 (HHGGGGGGHYSGGGGHGGSHHGGGGH) are 2 approximate repeats of H-H-G(4,6)-H. A compositionally biased stretch (gly residues) spans 43–66 (HGGGGGGHYSGGGGHGGSHHGGGG).

Belongs to the GRP family.

In terms of biological role, may be connected with the initiation of embryogenesis or with the metabolic changes produced by the removal of auxins. In Daucus carota (Wild carrot), this protein is Glycine-rich protein DC7.1.